We begin with the raw amino-acid sequence, 602 residues long: ATP-dependent DNA helicase II subunit 1 (602 aa).

The region spanning 268–483 (FQCPLILDEK…YDNMKKVTQS (216 aa)) is the Ku domain. 3 positions are modified to phosphoserine: Ser-370, Ser-371, and Ser-372.

This sequence belongs to the ku70 family. As to quaternary structure, heterodimer of YKU70/HDF1 and YKU80/HDF2. Post-translationally, sumoylated by MMS21.

It localises to the nucleus. Its subcellular location is the chromosome. It is found in the telomere. The catalysed reaction is ATP + H2O = ADP + phosphate + H(+). Its function is as follows. Single-stranded DNA-dependent ATP-dependent helicase. Involved in non-homologous end joining (NHEJ) DNA double strand break repair. DNA-binding is sequence-independent but has a high affinity to nicks in double-stranded DNA and to the ends of duplex DNA. Binds to naturally occurring chromosomal ends, and therefore provides chromosomal end protection. Appears to have a role in recruitment of telomerase and CDC13 to the telomere and the subsequent telomere elongation. Required also for telomere recombination to repair telomeric ends in the absence of telomerase. KU70, of the KU70/KU80 heterodimer, binds to the stem loop of TLC1, the RNA component of telomerase. Involved in telomere maintenance. Interacts with telomeric repeats and subtelomeric sequences thereby controlling telomere length and protecting against subtelomeric rearrangement. Maintains telomeric chromatin, which is involved in silencing the expression of genes located at the telomere. Required for mating-type switching. This chain is ATP-dependent DNA helicase II subunit 1 (YKU70), found in Saccharomyces cerevisiae (strain ATCC 204508 / S288c) (Baker's yeast).